The primary structure comprises 452 residues: Phosphoglucosamine mutase (452 aa).

The active-site Phosphoserine intermediate is serine 103. The Mg(2+) site is built by serine 103, aspartate 243, aspartate 245, and aspartate 247. Serine 103 carries the phosphoserine modification.

This sequence belongs to the phosphohexose mutase family. It depends on Mg(2+) as a cofactor. Post-translationally, activated by phosphorylation.

It carries out the reaction alpha-D-glucosamine 1-phosphate = D-glucosamine 6-phosphate. In terms of biological role, catalyzes the conversion of glucosamine-6-phosphate to glucosamine-1-phosphate. In Exiguobacterium sp. (strain ATCC BAA-1283 / AT1b), this protein is Phosphoglucosamine mutase.